Reading from the N-terminus, the 789-residue chain is Homocitrate dehydratase, mitochondrial (789 aa).

Residues 1–14 constitute a mitochondrion transit peptide; the sequence is MLSSANRFYIKRHL. Substrate is bound by residues Gln-96 and 189-191; that span reads DSH. [4Fe-4S] cluster is bound by residues Cys-385, Cys-448, and Cys-451. Substrate contacts are provided by residues Arg-476, Arg-481, Lys-610, and 672–673; that span reads AR.

This sequence belongs to the aconitase/IPM isomerase family. [4Fe-4S] cluster serves as cofactor.

The protein resides in the mitochondrion. It catalyses the reaction (2R)-homocitrate = cis-homoaconitate + H2O. It functions in the pathway amino-acid biosynthesis; L-lysine biosynthesis via AAA pathway; L-alpha-aminoadipate from 2-oxoglutarate: step 2/5. In terms of biological role, catalyzes the reversible dehydration of (R)-homocitrate to cis-homoaconitate, a step in the alpha-aminoadipate pathway for lysine biosynthesis. This chain is Homocitrate dehydratase, mitochondrial (ACO2), found in Saccharomyces cerevisiae (strain ATCC 204508 / S288c) (Baker's yeast).